A 1009-amino-acid chain; its full sequence is UvrABC system protein A (1009 aa).

32-39 contributes to the ATP binding site; sequence GLSGSGKS. 2 consecutive ABC transporter domains span residues 314-592 and 612-941; these read WSHG…AESQ and RDPS…KFLR. 645–652 is an ATP binding site; that stretch reads GVSGSGKS. A C4-type zinc finger spans residues 744–770; the sequence is CENCSGDGTIKIEMNFLPDVYVPCEVC. A disordered region spans residues 956–1009; it reads KAPRKTAARKTAAAKSTTKKTATVRTTNNTATKKAAAVTKKTAPAKKTTRARKA. Residues 964–997 show a composition bias toward low complexity; sequence RKTAAAKSTTKKTATVRTTNNTATKKAAAVTKKT. The span at 998–1009 shows a compositional bias: basic residues; that stretch reads APAKKTTRARKA.

This sequence belongs to the ABC transporter superfamily. UvrA family. In terms of assembly, forms a heterotetramer with UvrB during the search for lesions.

It is found in the cytoplasm. Its function is as follows. The UvrABC repair system catalyzes the recognition and processing of DNA lesions. UvrA is an ATPase and a DNA-binding protein. A damage recognition complex composed of 2 UvrA and 2 UvrB subunits scans DNA for abnormalities. When the presence of a lesion has been verified by UvrB, the UvrA molecules dissociate. This is UvrABC system protein A from Streptomyces avermitilis (strain ATCC 31267 / DSM 46492 / JCM 5070 / NBRC 14893 / NCIMB 12804 / NRRL 8165 / MA-4680).